The following is a 1385-amino-acid chain: DNA-directed RNA polymerase subunit beta' (1385 aa).

The Zn(2+) site is built by C72, C74, C87, and C90. The Mg(2+) site is built by D463, D465, and D467. Zn(2+) is bound by residues C813, C887, C894, and C897.

The protein belongs to the RNA polymerase beta' chain family. The RNAP catalytic core consists of 2 alpha, 1 beta, 1 beta' and 1 omega subunit. When a sigma factor is associated with the core the holoenzyme is formed, which can initiate transcription. Requires Mg(2+) as cofactor. The cofactor is Zn(2+).

The catalysed reaction is RNA(n) + a ribonucleoside 5'-triphosphate = RNA(n+1) + diphosphate. Its function is as follows. DNA-dependent RNA polymerase catalyzes the transcription of DNA into RNA using the four ribonucleoside triphosphates as substrates. This chain is DNA-directed RNA polymerase subunit beta', found in Trichlorobacter lovleyi (strain ATCC BAA-1151 / DSM 17278 / SZ) (Geobacter lovleyi).